The primary structure comprises 97 residues: uncharacterized protein (97 aa).

This is an uncharacterized protein from Salmonella typhi.